The following is a 410-amino-acid chain: LanC-like protein GCR2 (410 aa).

Zn(2+) is bound by residues Cys283, Cys328, and His329.

This sequence belongs to the LanC-like protein family. As to quaternary structure, may interact (via C-terminus) with GPA1.

Its function is as follows. May play a role in abscisic acid (ABA) signaling. This chain is LanC-like protein GCR2 (GCR2), found in Arabidopsis thaliana (Mouse-ear cress).